The sequence spans 889 residues: DNA-directed RNA polymerase subunit Rpo1N (889 aa).

Zn(2+)-binding residues include Cys62, Cys65, Cys72, His75, Cys102, Cys105, Cys149, and Cys152. Residues Asp466, Asp468, and Asp470 each coordinate Mg(2+).

This sequence belongs to the RNA polymerase beta' chain family. Part of the RNA polymerase complex. Mg(2+) serves as cofactor. Zn(2+) is required as a cofactor.

The protein resides in the cytoplasm. The enzyme catalyses RNA(n) + a ribonucleoside 5'-triphosphate = RNA(n+1) + diphosphate. Its function is as follows. DNA-dependent RNA polymerase (RNAP) catalyzes the transcription of DNA into RNA using the four ribonucleoside triphosphates as substrates. Forms the clamp head domain. This is DNA-directed RNA polymerase subunit Rpo1N from Methanococcus vannielii (strain ATCC 35089 / DSM 1224 / JCM 13029 / OCM 148 / SB).